Here is a 124-residue protein sequence, read N- to C-terminus: NADPH-dependent 7-cyano-7-deazaguanine reductase (124 aa).

Catalysis depends on C40, which acts as the Thioimide intermediate. D47 functions as the Proton donor in the catalytic mechanism. Residues V62–L64 and H81–E82 contribute to the substrate site.

Belongs to the GTP cyclohydrolase I family. QueF type 1 subfamily.

The protein localises to the cytoplasm. It catalyses the reaction 7-aminomethyl-7-carbaguanine + 2 NADP(+) = 7-cyano-7-deazaguanine + 2 NADPH + 3 H(+). Its pathway is tRNA modification; tRNA-queuosine biosynthesis. In terms of biological role, catalyzes the NADPH-dependent reduction of 7-cyano-7-deazaguanine (preQ0) to 7-aminomethyl-7-deazaguanine (preQ1). This chain is NADPH-dependent 7-cyano-7-deazaguanine reductase, found in Wolinella succinogenes (strain ATCC 29543 / DSM 1740 / CCUG 13145 / JCM 31913 / LMG 7466 / NCTC 11488 / FDC 602W) (Vibrio succinogenes).